The chain runs to 383 residues: Succinyl-diaminopimelate desuccinylase (383 aa).

Histidine 73 is a Zn(2+) binding site. Residue aspartate 75 is part of the active site. Position 107 (aspartate 107) interacts with Zn(2+). The active-site Proton acceptor is the glutamate 141. Positions 142, 170, and 356 each coordinate Zn(2+).

Belongs to the peptidase M20A family. DapE subfamily. As to quaternary structure, homodimer. The cofactor is Zn(2+). Co(2+) serves as cofactor.

The enzyme catalyses N-succinyl-(2S,6S)-2,6-diaminopimelate + H2O = (2S,6S)-2,6-diaminopimelate + succinate. It participates in amino-acid biosynthesis; L-lysine biosynthesis via DAP pathway; LL-2,6-diaminopimelate from (S)-tetrahydrodipicolinate (succinylase route): step 3/3. In terms of biological role, catalyzes the hydrolysis of N-succinyl-L,L-diaminopimelic acid (SDAP), forming succinate and LL-2,6-diaminopimelate (DAP), an intermediate involved in the bacterial biosynthesis of lysine and meso-diaminopimelic acid, an essential component of bacterial cell walls. The polypeptide is Succinyl-diaminopimelate desuccinylase (Pseudomonas putida (strain ATCC 700007 / DSM 6899 / JCM 31910 / BCRC 17059 / LMG 24140 / F1)).